The chain runs to 359 residues: Apelin receptor B (359 aa).

Topologically, residues 1–36 (MNAMDNMTADYSPDYFDDAVNSSMCEYDEWEPSYSL) are extracellular. 2 N-linked (GlcNAc...) asparagine glycosylation sites follow: asparagine 6 and asparagine 21. 2 cysteine pairs are disulfide-bonded: cysteine 25–cysteine 288 and cysteine 107–cysteine 186. Residues 37 to 57 (IPVLYMLIFILGLTGNGVVIF) traverse the membrane as a helical segment. The Cytoplasmic segment spans residues 58-75 (TVWRAQSKRRAADVYIGN). The helical transmembrane segment at 76–96 (LALADLTFVVTLPLWAVYTAL) threads the bilayer. Residues 97–108 (GYHWPFGVALCK) lie on the Extracellular side of the membrane. A helical membrane pass occupies residues 109–129 (ISSYVVLLNMYASVFCLTCLS). Residues 130–151 (LDRYMAIVHSLTSTQLRTRGHM) are Cytoplasmic-facing. A helical transmembrane segment spans residues 152 to 172 (RASLTAIWLLSGVLAAPTLLF). Over 173–213 (RTTVYDVETNRTSCAMDFNLVVSQPGQETYWIAGLSISSTA) the chain is Extracellular. Residue asparagine 182 is glycosylated (N-linked (GlcNAc...) asparagine). Residues 214–234 (LGFLIPLLAMMVCYGFIGCTV) form a helical membrane-spanning segment. The Cytoplasmic portion of the chain corresponds to 235-251 (TRHFNSLRKEDQRKRRL). The helical transmembrane segment at 252 to 272 (LKIITTLVVVFAACWMPFHVV) threads the bilayer. Residues 273–286 (KTMDALSYLNLAPD) lie on the Extracellular side of the membrane. A helical transmembrane segment spans residues 287–307 (SCTFLNLLLLAHPYATCLAYV). Residues 308-359 (NSCLNPLLYAFFDLRFRSQCLCLLNLKKALHASPASSLSSQKTEAQSLATKV) lie on the Cytoplasmic side of the membrane.

This sequence belongs to the G-protein coupled receptor 1 family. As to expression, mesendodermal expression at the blastoderm margin appears by 4.5 hpf. At early gastrulation, expression is maintained ventrolaterally while expression in dorsal cells and random deep cells declines. During gastrulation and segmentation, expression is maintained in adaxial, intermediate, and lateral plate mesoderm. During late segmentation, expressed in several regions including the forming heart. By 24 hpf, expressed in the dorsal aorta, caudal vein, and intersomitic blood vessels.

The protein localises to the cell membrane. Its function is as follows. G protein-coupled receptor for peptide hormones apelin (apln) and apelin receptor early endogenous ligand (apela), that plays a role in the regulation of normal cardiovascular function and fluid homeostasis. When acting as apelin receptor, activates both G(i) protein pathway that inhibits adenylate cyclase activity, and the beta-arrestin pathway that promotes internalization of the receptor. Also functions as mechanoreceptor that is activated by pathological stimuli in a G-protein-independent fashion to induce beta-arrestin signaling, hence eliciting cardiac hypertrophy. However, the presence of apelin ligand blunts cardiac hypertrophic induction from APLNR/APJ on response to pathological stimuli. Plays a key role in early development such as gastrulation, blood vessels formation and heart morphogenesis by acting as a receptor for apela hormone, promoting endoderm and mesendoderm cell migration and regulating the migration of cells fated to become myocardial progenitors, respectively. Positively regulates angioblast migration toward the embryonic midline, i.e. the position of the future vessel formation, during vasculogenesis. May promote sinus venosus (SV)-derived endothelial cells migration into the developing heart to promote coronary blood vessel development. Required for cardiovascular development, particularly for intersomitic vein angiogenesis by acting as a receptor for apln hormone. Plays a role in various processes in adults such as regulation of blood vessel formation, blood pressure, heart contractility and heart failure. Acts redundantly with agtrl1a in heart development. Functionally, g protein-coupled receptor for peptide hormones apelin (APLN) and apelin receptor early endogenous ligand (APELA/ELA), that plays a role in the regulation of normal cardiovascular function and fluid homeostasis. When acting as apelin receptor, activates both G(i) protein pathway that inhibits adenylate cyclase activity, and the beta-arrestin pathway that promotes internalization of the receptor. APLNR/APJ also functions as mechanoreceptor that is activated by pathological stimuli in a G-protein-independent fashion to induce beta-arrestin signaling, hence eliciting cardiac hypertrophy. Plays a key role in early development such as gastrulation, blood vessels formation and heart morphogenesis by acting as a APELA receptor. May promote angioblast migration toward the embryonic midline, i.e. the position of the future vessel formation, during vasculogenesis. Promotes sinus venosus (SV)-derived endothelial cells migration into the developing heart to promote coronary blood vessel development. Also plays a role in various processes in adults such as regulation of blood vessel formation, blood pressure, heart contractility and heart failure. The polypeptide is Apelin receptor B (aplnrb) (Danio rerio (Zebrafish)).